The primary structure comprises 219 residues: Small ribosomal subunit protein uS3c (219 aa).

A KH type-2 domain is found at 43–118 (IKNYVQNNMI…KLNITITRIE (76 aa)).

The protein belongs to the universal ribosomal protein uS3 family. In terms of assembly, part of the 30S ribosomal subunit.

It is found in the plastid. The polypeptide is Small ribosomal subunit protein uS3c (rps3) (Cuscuta exaltata (Tall dodder)).